The primary structure comprises 202 residues: Thymidine kinase (202 aa).

ATP is bound by residues 16 to 23 (GPMFSGKS) and 99 to 102 (DEVQ). Glu-100 serves as the catalytic Proton acceptor. Zn(2+) is bound by residues Cys-156, Cys-159, Cys-194, and His-197.

Belongs to the thymidine kinase family. In terms of assembly, homotetramer.

The protein resides in the cytoplasm. The catalysed reaction is thymidine + ATP = dTMP + ADP + H(+). The polypeptide is Thymidine kinase (Deinococcus deserti (strain DSM 17065 / CIP 109153 / LMG 22923 / VCD115)).